An 88-amino-acid chain; its full sequence is Small ribosomal subunit protein uS15 (88 aa).

Belongs to the universal ribosomal protein uS15 family. In terms of assembly, part of the 30S ribosomal subunit. Forms a bridge to the 50S subunit in the 70S ribosome, contacting the 23S rRNA.

One of the primary rRNA binding proteins, it binds directly to 16S rRNA where it helps nucleate assembly of the platform of the 30S subunit by binding and bridging several RNA helices of the 16S rRNA. Its function is as follows. Forms an intersubunit bridge (bridge B4) with the 23S rRNA of the 50S subunit in the ribosome. This chain is Small ribosomal subunit protein uS15, found in Borrelia garinii subsp. bavariensis (strain ATCC BAA-2496 / DSM 23469 / PBi) (Borreliella bavariensis).